Reading from the N-terminus, the 485-residue chain is Glutamyl-tRNA(Gln) amidotransferase subunit A (485 aa).

Active-site charge relay system residues include Lys78 and Ser153. Ser177 serves as the catalytic Acyl-ester intermediate.

It belongs to the amidase family. GatA subfamily. As to quaternary structure, heterotrimer of A, B and C subunits.

The catalysed reaction is L-glutamyl-tRNA(Gln) + L-glutamine + ATP + H2O = L-glutaminyl-tRNA(Gln) + L-glutamate + ADP + phosphate + H(+). In terms of biological role, allows the formation of correctly charged Gln-tRNA(Gln) through the transamidation of misacylated Glu-tRNA(Gln) in organisms which lack glutaminyl-tRNA synthetase. The reaction takes place in the presence of glutamine and ATP through an activated gamma-phospho-Glu-tRNA(Gln). The sequence is that of Glutamyl-tRNA(Gln) amidotransferase subunit A from Bacillus anthracis (strain A0248).